We begin with the raw amino-acid sequence, 369 residues long: Endo-1,4-beta-xylanase A (369 aa).

Residues 1 to 20 (MRKLTQFCLGLMLLPIAAVA) form the signal peptide. A GH10 domain is found at 21 to 367 (QNQPTMKDVL…KPVVKEIIKL (347 aa)). Catalysis depends on Glu156, which acts as the Proton donor. Glu261 functions as the Nucleophile in the catalytic mechanism.

This sequence belongs to the glycosyl hydrolase 10 (cellulase F) family.

It catalyses the reaction Endohydrolysis of (1-&gt;4)-beta-D-xylosidic linkages in xylans.. It functions in the pathway glycan degradation; xylan degradation. The chain is Endo-1,4-beta-xylanase A (xynA) from Xylanibacter ruminicola (Prevotella ruminicola).